Consider the following 223-residue polypeptide: Serine/threonine/tyrosine-interacting protein (223 aa).

The Tyrosine-protein phosphatase domain occupies 28–176 (EMQEILPGLF…LQEYEAIYLA (149 aa)). Residues 76–78 (FQQ) carry the Interaction with FBXW7 motif. 3 positions are modified to phosphoserine: Ser184, Ser193, and Ser201. A disordered region spans residues 197 to 223 (GTTGSLKRTHEEEDDFGTMQVATAQNG).

The protein belongs to the protein-tyrosine phosphatase family. Non-receptor class subfamily. As to quaternary structure, interacts with MAPK1; independently of MAPK1 phosphorylation status. Interacts with CARHSP1/Crhsp-24. Interacts (via FQQ motif) with FBXW7 isoforms 1 (via F-box domain) and 3 (via F-box domain); the interaction is direct and prevents FBXW7 interaction with SKP1, a component of the SCF(FBXW7) complex. Does not interact with FBXW7 isoform 2.

Its subcellular location is the nucleus. It localises to the cytoplasm. It is found in the cytosol. Its function is as follows. Catalytically inactive phosphatase. Acts as a nuclear anchor for MAPK1/MAPK3 (ERK1/ERK2). Modulates cell-fate decisions and cell migration by spatiotemporal regulation of MAPK1/MAPK3 (ERK1/ERK2). By binding to the F-box of FBXW7, prevents the assembly of FBXW7 into the SCF E3 ubiquitin-protein ligase complex, and thereby inhibits degradation of its substrates. Plays a role in spermatogenesis. This chain is Serine/threonine/tyrosine-interacting protein, found in Homo sapiens (Human).